The primary structure comprises 477 residues: Ribulose bisphosphate carboxylase large chain (477 aa).

A propeptide spanning residues 1-2 (MS) is cleaved from the precursor. Proline 3 is subject to N-acetylproline. Lysine 14 carries the N6,N6,N6-trimethyllysine modification. The substrate site is built by asparagine 123 and threonine 173. Lysine 175 serves as the catalytic Proton acceptor. Lysine 177 serves as a coordination point for substrate. Residues lysine 201, aspartate 203, and glutamate 204 each contribute to the Mg(2+) site. An N6-carboxylysine modification is found at lysine 201. Residue histidine 294 is the Proton acceptor of the active site. The substrate site is built by arginine 295, histidine 327, and serine 379.

This sequence belongs to the RuBisCO large chain family. Type I subfamily. Heterohexadecamer of 8 large chains and 8 small chains; disulfide-linked. The disulfide link is formed within the large subunit homodimers. Requires Mg(2+) as cofactor. In terms of processing, the disulfide bond which can form in the large chain dimeric partners within the hexadecamer appears to be associated with oxidative stress and protein turnover.

It is found in the plastid. The protein resides in the chloroplast. The catalysed reaction is 2 (2R)-3-phosphoglycerate + 2 H(+) = D-ribulose 1,5-bisphosphate + CO2 + H2O. It catalyses the reaction D-ribulose 1,5-bisphosphate + O2 = 2-phosphoglycolate + (2R)-3-phosphoglycerate + 2 H(+). Functionally, ruBisCO catalyzes two reactions: the carboxylation of D-ribulose 1,5-bisphosphate, the primary event in carbon dioxide fixation, as well as the oxidative fragmentation of the pentose substrate in the photorespiration process. Both reactions occur simultaneously and in competition at the same active site. This chain is Ribulose bisphosphate carboxylase large chain, found in Hyophorbe lagenicaulis (Bottle palm).